The following is a 177-amino-acid chain: Large ribosomal subunit protein uL6 (177 aa).

This sequence belongs to the universal ribosomal protein uL6 family. As to quaternary structure, part of the 50S ribosomal subunit.

Functionally, this protein binds to the 23S rRNA, and is important in its secondary structure. It is located near the subunit interface in the base of the L7/L12 stalk, and near the tRNA binding site of the peptidyltransferase center. The chain is Large ribosomal subunit protein uL6 from Marinomonas sp. (strain MWYL1).